The primary structure comprises 264 residues: TLC domain-containing protein 2 (264 aa).

The next 6 membrane-spanning stretches (helical) occupy residues P3–L23, L42–L62, W77–L97, V114–V134, S169–F189, and L199–I219. The region spanning R34–L227 is the TLC domain. The segment at R230–D264 is disordered. Over residues G237 to N250 the composition is skewed to basic and acidic residues. Over residues P252–D264 the composition is skewed to polar residues.

This sequence belongs to the TLCD family.

The protein localises to the cell membrane. In terms of biological role, regulates the composition and fluidity of the plasma membrane. Inhibits the incorporation of membrane-fluidizing phospholipids containing omega-3 long-chain polyunsaturated fatty acids (LCPUFA) and thereby promotes membrane rigidity. Does not appear to have any effect on LCPUFA synthesis. This is TLC domain-containing protein 2 (TLCD2) from Homo sapiens (Human).